Reading from the N-terminus, the 612-residue chain is Peroxisomal carnitine O-octanoyltransferase (612 aa).

The residue at position 1 (methionine 1) is an N-acetylmethionine. N6-succinyllysine is present on residues lysine 40 and lysine 57. Histidine 327 acts as the Proton acceptor in catalysis. CoA is bound by residues lysine 406 and 410–417 (KEKQLHPD). Lysine 406 carries the N6-acetyllysine; alternate modification. Position 406 is an N6-succinyllysine; alternate (lysine 406). Residues tyrosine 439, threonine 441, and threonine 452 each contribute to the (R)-carnitine site. The Microbody targeting signal motif lies at 610 to 612 (PHL).

The protein belongs to the carnitine/choline acetyltransferase family. In terms of assembly, monomer.

The protein localises to the peroxisome. It catalyses the reaction octanoyl-CoA + (R)-carnitine = O-octanoyl-(R)-carnitine + CoA. The enzyme catalyses 4,8-dimethylnonanoyl-CoA + (R)-carnitine = O-4,8-dimethylnonanoyl-(R)-carnitine + CoA. The protein operates within lipid metabolism; fatty acid beta-oxidation. Functionally, beta-oxidation of fatty acids. The highest activity concerns the C6 to C10 chain length substrate. The protein is Peroxisomal carnitine O-octanoyltransferase (CROT) of Bos taurus (Bovine).